Consider the following 343-residue polypeptide: S-adenosylmethionine:tRNA ribosyltransferase-isomerase (343 aa).

This sequence belongs to the QueA family. As to quaternary structure, monomer.

Its subcellular location is the cytoplasm. The enzyme catalyses 7-aminomethyl-7-carbaguanosine(34) in tRNA + S-adenosyl-L-methionine = epoxyqueuosine(34) in tRNA + adenine + L-methionine + 2 H(+). Its pathway is tRNA modification; tRNA-queuosine biosynthesis. Functionally, transfers and isomerizes the ribose moiety from AdoMet to the 7-aminomethyl group of 7-deazaguanine (preQ1-tRNA) to give epoxyqueuosine (oQ-tRNA). This chain is S-adenosylmethionine:tRNA ribosyltransferase-isomerase, found in Dehalococcoides mccartyi (strain ATCC BAA-2100 / JCM 16839 / KCTC 5957 / BAV1).